The sequence spans 863 residues: Alanine--tRNA ligase (863 aa).

Zn(2+)-binding residues include histidine 552, histidine 556, cysteine 654, and histidine 658.

This sequence belongs to the class-II aminoacyl-tRNA synthetase family. The cofactor is Zn(2+).

It is found in the cytoplasm. The catalysed reaction is tRNA(Ala) + L-alanine + ATP = L-alanyl-tRNA(Ala) + AMP + diphosphate. In terms of biological role, catalyzes the attachment of alanine to tRNA(Ala) in a two-step reaction: alanine is first activated by ATP to form Ala-AMP and then transferred to the acceptor end of tRNA(Ala). Also edits incorrectly charged Ser-tRNA(Ala) and Gly-tRNA(Ala) via its editing domain. In Nitrosomonas eutropha (strain DSM 101675 / C91 / Nm57), this protein is Alanine--tRNA ligase.